A 638-amino-acid chain; its full sequence is Epithelial sodium channel subunit delta (638 aa).

The span at 1-13 (MAEHRSMDGRMEA) shows a compositional bias: basic and acidic residues. The segment at 1–47 (MAEHRSMDGRMEAATRGGSHLQAAAQTPPRPGPPSAPPPPPKEGHQE) is disordered. Residues 1–86 (MAEHRSMDGR…CSRGNRLKTT (86 aa)) lie on the Cytoplasmic side of the membrane. Residues 28–41 (PPRPGPPSAPPPPP) are compositionally biased toward pro residues. Residues 87–107 (SWGLLSLGALVALCWQLGLLF) form a helical membrane-spanning segment. Residues 108–530 (ERHWHRPVLM…VPQLLSAMGS (423 aa)) lie on the Extracellular side of the membrane. Residues asparagine 166 and asparagine 384 are each glycosylated (N-linked (GlcNAc...) asparagine). The helical transmembrane segment at 531–551 (LCSLWFGASVLSLLELLELLL) threads the bilayer. At 552–638 (DASALTLVLG…GPQPLETLDT (87 aa)) the chain is on the cytoplasmic side. The tract at residues 574 to 613 (RASPASGASSIKPEASQMPTPAGGTSDDPEPSGPHLPRVM) is disordered.

Belongs to the amiloride-sensitive sodium channel (TC 1.A.6) family. SCNN1D subfamily. As to quaternary structure, can form an alternative heterotrimeric epithelial sodium channel (ENaC), composed of a delta (SCNN1D), beta (SCNN1B), and gamma (SCNN1G) subunit, where the delta (SCNN1D) subunit replaces the alpha (SCNN1A) subunit.

The protein resides in the apical cell membrane. The enzyme catalyses Na(+)(in) = Na(+)(out). Originally identified and characterized by its inhibition by the diuretic drug amiloride. Functionally, potential alternative pore-forming subunit of the epithelial sodium channel (ENaC), capable of replacing the alpha/SCNN1A subunit, creating a more active channel with distinct properties. ENaC functions in epithelial tissues, where it facilitates the electrodiffusion of sodium ions from the extracellular fluid through the apical membrane of cells, with water following osmotically, regulating sodium balance and fluid homeostasis. This subunit could also function independently as a sodium channel or assemble into other tissue-specific heterotrimeric sodium channels. This chain is Epithelial sodium channel subunit delta, found in Pan troglodytes (Chimpanzee).